The following is a 626-amino-acid chain: MPSELKVLHIVLVLLYTLSSSTYNSNGNWTLEGSAADNSIGDTILTNTKKHSCGQTFNNESIPIKDSSFSFHFLFGIVPEHTQSGSHGMSFVISPTAGLPGASSDQYLGLFNETTNGKSSNHVIAIELDIQKDQEFGDIDDNHVAMVMRLSIVYSHPDQQLNVTLFPAEIPVPPRKPLLSLNRDLSPYFLEEMYYGYTASTGSIGAFHYMLSSYATPKVENPTWEFIVVPTLPPYPKKSSDRTKKILAVCLTLAVFAVFVASGICFVFYTRHKKVKEVLEEWEIQYGPHRFAYKELLNATKDFKEKQLLGKGGFGQVFKGTLPGSNAEIAVKRTSHDSRQGMSEFLAEISTIGRLRHPNLVRLLGYCRHKENLYLVYDFTPNGSLDKYLDRNENQERLTWEQRFKIIKDVASALLHLHQEWVQIIIHRDIKPANVLIDHEMNARIGDFGLAKLYDQGLDPQTSRVAGTFGYIAPELLRTGRATTSTDVYAFGLVMLEVVCGRRMIERRAPENEEVLVDWILELWESGKLFDAAEESIRQEQNRGEIELLLKLGLLCAHHTELIRPNMSAVMQILNGVSQLPDNLLDVVRAENLRGMPETSIEVLLGLNLYSVGTMTLTNSFLSHGR.

Residues 1 to 21 form the signal peptide; sequence MPSELKVLHIVLVLLYTLSSS. Residues 22 to 212 form a legume-lectin like region; that stretch reads TYNSNGNWTL…SIGAFHYMLS (191 aa). The Extracellular portion of the chain corresponds to 22 to 245; it reads TYNSNGNWTL…PKKSSDRTKK (224 aa). N-linked (GlcNAc...) asparagine glycosylation is found at Asn28, Asn59, Asn112, and Asn162. The chain crosses the membrane as a helical span at residues 246–266; that stretch reads ILAVCLTLAVFAVFVASGICF. At 267–626 the chain is on the cytoplasmic side; sequence VFYTRHKKVK…LTNSFLSHGR (360 aa). Positions 303 to 562 constitute a Protein kinase domain; that stretch reads FKEKQLLGKG…GLLCAHHTEL (260 aa). ATP contacts are provided by residues 309-317 and Lys332; that span reads LGKGGFGQV. The Proton acceptor role is filled by Asp429.

It in the C-terminal section; belongs to the protein kinase superfamily. Ser/Thr protein kinase family. In the N-terminal section; belongs to the leguminous lectin family.

It localises to the cell membrane. It catalyses the reaction L-seryl-[protein] + ATP = O-phospho-L-seryl-[protein] + ADP + H(+). The catalysed reaction is L-threonyl-[protein] + ATP = O-phospho-L-threonyl-[protein] + ADP + H(+). The protein is Putative L-type lectin-domain containing receptor kinase V.8 (LECRK58) of Arabidopsis thaliana (Mouse-ear cress).